The primary structure comprises 475 residues: tRNA-2-methylthio-N(6)-dimethylallyladenosine synthase (475 aa).

The MTTase N-terminal domain maps to 7 to 127 (RKLHIKSYGC…LPKLLAKARD (121 aa)). [4Fe-4S] cluster contacts are provided by C16, C52, C90, C168, C172, and C175. One can recognise a Radical SAM core domain in the interval 154 to 388 (RARGVSAFVT…AQLQALIDAQ (235 aa)). The TRAM domain maps to 394-456 (RAAIGRTVEV…RYSLKGRLAS (63 aa)).

This sequence belongs to the methylthiotransferase family. MiaB subfamily. As to quaternary structure, monomer. The cofactor is [4Fe-4S] cluster.

Its subcellular location is the cytoplasm. It carries out the reaction N(6)-dimethylallyladenosine(37) in tRNA + (sulfur carrier)-SH + AH2 + 2 S-adenosyl-L-methionine = 2-methylsulfanyl-N(6)-dimethylallyladenosine(37) in tRNA + (sulfur carrier)-H + 5'-deoxyadenosine + L-methionine + A + S-adenosyl-L-homocysteine + 2 H(+). In terms of biological role, catalyzes the methylthiolation of N6-(dimethylallyl)adenosine (i(6)A), leading to the formation of 2-methylthio-N6-(dimethylallyl)adenosine (ms(2)i(6)A) at position 37 in tRNAs that read codons beginning with uridine. This is tRNA-2-methylthio-N(6)-dimethylallyladenosine synthase from Afipia carboxidovorans (strain ATCC 49405 / DSM 1227 / KCTC 32145 / OM5) (Oligotropha carboxidovorans).